Consider the following 215-residue polypeptide: UPF0319 protein VV2_0960 (215 aa).

Positions M1–A21 are cleaved as a signal peptide.

It belongs to the UPF0319 family.

This chain is UPF0319 protein VV2_0960, found in Vibrio vulnificus (strain CMCP6).